The sequence spans 258 residues: Tryptophan synthase alpha chain (258 aa).

Active-site proton acceptor residues include glutamate 47 and aspartate 58.

Belongs to the TrpA family. Tetramer of two alpha and two beta chains.

It catalyses the reaction (1S,2R)-1-C-(indol-3-yl)glycerol 3-phosphate + L-serine = D-glyceraldehyde 3-phosphate + L-tryptophan + H2O. It functions in the pathway amino-acid biosynthesis; L-tryptophan biosynthesis; L-tryptophan from chorismate: step 5/5. In terms of biological role, the alpha subunit is responsible for the aldol cleavage of indoleglycerol phosphate to indole and glyceraldehyde 3-phosphate. In Bacillus thuringiensis (strain Al Hakam), this protein is Tryptophan synthase alpha chain.